The primary structure comprises 73 residues: Large ribosomal subunit protein bL28 (73 aa).

It belongs to the bacterial ribosomal protein bL28 family.

This is Large ribosomal subunit protein bL28 from Anaeromyxobacter dehalogenans (strain 2CP-1 / ATCC BAA-258).